A 538-amino-acid polypeptide reads, in one-letter code: Natural resistance-associated macrophage protein 1 (538 aa).

A disordered region spans residues 1–36 (MTGDTDPPKQSRTQYGSISSSPSPGPPQVPPGGTYL). At 1-54 (MTGDTDPPKQSRTQYGSISSSPSPGPPQVPPGGTYLSEKIPIPNAEPGTFSLRK) the chain is on the cytoplasmic side. Residues 55–75 (LWAFTGPGFLMSIAYLDPGNI) form a helical membrane-spanning segment. The Extracellular segment spans residues 76–81 (QSDLQA). Residues 82 to 102 (GAVAGFKLLWVLLWATVLGLL) traverse the membrane as a helical segment. Residues 103–139 (CQRLAARLGVVTGKDLGEICHLYYPKVPRTLLWLNME) are Cytoplasmic-facing. Residues 140–160 (LAIVGSDMQEVIGTAIAFNLL) traverse the membrane as a helical segment. Over 161 to 164 (SAGR) the chain is Extracellular. Residues 165-185 (IPLWGGVLITVVDTFFFLYLN) traverse the membrane as a helical segment. Residues 186–193 (NYGLRKLE) lie on the Cytoplasmic side of the membrane. The chain crosses the membrane as a helical span at residues 194-214 (AFFAFLIAIMAFTFGYEYVVA). The Extracellular portion of the chain corresponds to 215–240 (RPAQGALLRGLFLPSCSGCGQPELLQ). The helical transmembrane segment at 241 to 261 (AVGIVGAIIMPHNIYLHSALV) threads the bilayer. The Cytoplasmic portion of the chain corresponds to 262–286 (KSREVDRTRREDIREANMYFLIEST). Residues 287 to 307 (IALFVSFFINLFVMAVFGQAF) form a helical membrane-spanning segment. The Extracellular portion of the chain corresponds to 308–346 (YQQTNQAAFNICANSSLHDYAKIFPRNNLTVAVDFYQGG). 2 N-linked (GlcNAc...) asparagine glycosylation sites follow: N321 and N335. Residues 347–367 (VILGCLFGPAALYIWAVGLLA) form a helical membrane-spanning segment. Topologically, residues 368–394 (AGQSSTMTGTYAGQFVMEGFLKLRWSR) are cytoplasmic. A helical transmembrane segment spans residues 395 to 415 (FARLLLTRSCAILPALLVAVF). The Extracellular portion of the chain corresponds to 416-432 (KELQDLSSLNDLLNVLQ). The helical transmembrane segment at 433–453 (SLLLPFAVLPILTFTSMPALM) threads the bilayer. Topologically, residues 454–468 (QEFASGRVNKVITSS) are cytoplasmic. A helical transmembrane segment spans residues 469 to 489 (IMLLVCAINFYFLVSYLPSLP). The Extracellular portion of the chain corresponds to 490–492 (HPA). Residues 493 to 513 (YFGLVALLAVIYLGLTTYLVW) form a helical membrane-spanning segment. Topologically, residues 514-538 (TCLIAHGATLLVHSSHQHFLYGLLE) are cytoplasmic.

Belongs to the NRAMP family.

The protein localises to the late endosome membrane. Its subcellular location is the lysosome membrane. It carries out the reaction Zn(2+)(in) + H(+)(out) = Zn(2+)(out) + H(+)(in). It catalyses the reaction Fe(2+)(in) + H(+)(out) = Fe(2+)(out) + H(+)(in). The enzyme catalyses Mn(2+)(in) + H(+)(out) = Mn(2+)(out) + H(+)(in). Functionally, macrophage-specific antiporter that fluxes metal ions in either direction against a proton gradient. Localized to late endosomal lysosomal membranes, delivers bivalent cations from the cytosol into these acidic compartments where they may directly affect antimicrobial activity. Involved in iron metabolism and host natural resistance to infection with intracellular parasites. Pathogen resistance involves sequestration of Fe(2+) and Mn(2+), cofactors of both prokaryotic and eukaryotic catalases and superoxide dismutases, not only to protect the macrophage against its own generation of reactive oxygen species, but to deny the cations to the pathogen for synthesis of its protective enzymes. In Sus scrofa (Pig), this protein is Natural resistance-associated macrophage protein 1 (SLC11A1).